A 249-amino-acid chain; its full sequence is ATP synthase subunit a, chloroplastic (249 aa).

The next 5 membrane-spanning stretches (helical) occupy residues 40 to 60 (QVLI…VLAV), 97 to 117 (VPFI…GALL), 136 to 156 (INTT…AGLS), 201 to 221 (LVVV…VMFL), and 222 to 242 (GLFT…AYIG).

The protein belongs to the ATPase A chain family. In terms of assembly, F-type ATPases have 2 components, CF(1) - the catalytic core - and CF(0) - the membrane proton channel. CF(1) has five subunits: alpha(3), beta(3), gamma(1), delta(1), epsilon(1). CF(0) has four main subunits: a, b, b' and c.

Its subcellular location is the plastid. It localises to the chloroplast thylakoid membrane. In terms of biological role, key component of the proton channel; it plays a direct role in the translocation of protons across the membrane. This is ATP synthase subunit a, chloroplastic from Arabis hirsuta (Hairy rock-cress).